Here is a 570-residue protein sequence, read N- to C-terminus: Sulfite reductase [NADPH] hemoprotein beta-component (570 aa).

The [4Fe-4S] cluster site is built by C434, C440, C479, and C483. C483 provides a ligand contact to siroheme.

The protein belongs to the nitrite and sulfite reductase 4Fe-4S domain family. In terms of assembly, alpha(8)-beta(8). The alpha component is a flavoprotein, the beta component is a hemoprotein. Siroheme serves as cofactor. It depends on [4Fe-4S] cluster as a cofactor.

It carries out the reaction hydrogen sulfide + 3 NADP(+) + 3 H2O = sulfite + 3 NADPH + 4 H(+). Its pathway is sulfur metabolism; hydrogen sulfide biosynthesis; hydrogen sulfide from sulfite (NADPH route): step 1/1. Component of the sulfite reductase complex that catalyzes the 6-electron reduction of sulfite to sulfide. This is one of several activities required for the biosynthesis of L-cysteine from sulfate. In Salmonella dublin (strain CT_02021853), this protein is Sulfite reductase [NADPH] hemoprotein beta-component.